The following is a 196-amino-acid chain: Nucleoside triphosphate pyrophosphatase (196 aa).

Residue Asp-70 is the Proton acceptor of the active site.

Belongs to the Maf family. A divalent metal cation is required as a cofactor.

The protein resides in the cytoplasm. The catalysed reaction is a ribonucleoside 5'-triphosphate + H2O = a ribonucleoside 5'-phosphate + diphosphate + H(+). It catalyses the reaction a 2'-deoxyribonucleoside 5'-triphosphate + H2O = a 2'-deoxyribonucleoside 5'-phosphate + diphosphate + H(+). In terms of biological role, nucleoside triphosphate pyrophosphatase. May have a dual role in cell division arrest and in preventing the incorporation of modified nucleotides into cellular nucleic acids. The polypeptide is Nucleoside triphosphate pyrophosphatase (Gloeothece citriformis (strain PCC 7424) (Cyanothece sp. (strain PCC 7424))).